The following is a 225-amino-acid chain: 3-dehydroquinate dehydratase (225 aa).

3-dehydroquinate-binding positions include Ser6, 30–32 (EWR), and Arg62. His118 serves as the catalytic Proton donor/acceptor. Lys143 functions as the Schiff-base intermediate with substrate in the catalytic mechanism. The 3-dehydroquinate site is built by Arg186, Ser205, and Gln209.

This sequence belongs to the type-I 3-dehydroquinase family. As to quaternary structure, homodimer.

It catalyses the reaction 3-dehydroquinate = 3-dehydroshikimate + H2O. The protein operates within metabolic intermediate biosynthesis; chorismate biosynthesis; chorismate from D-erythrose 4-phosphate and phosphoenolpyruvate: step 3/7. In terms of biological role, involved in the third step of the chorismate pathway, which leads to the biosynthesis of aromatic amino acids. Catalyzes the cis-dehydration of 3-dehydroquinate (DHQ) and introduces the first double bond of the aromatic ring to yield 3-dehydroshikimate. This is 3-dehydroquinate dehydratase from Streptococcus sanguinis (strain SK36).